A 498-amino-acid polypeptide reads, in one-letter code: Flagellin (498 aa).

Belongs to the bacterial flagellin family.

It is found in the secreted. Its subcellular location is the bacterial flagellum. Its function is as follows. Flagellin is the subunit protein which polymerizes to form the filaments of bacterial flagella. The polypeptide is Flagellin (fliC) (Escherichia coli (strain K12)).